We begin with the raw amino-acid sequence, 1074 residues long: Phospholipase D1 (1074 aa).

The region spanning 81–212 (IKAQVLEVER…TEFLDVSQLS (132 aa)) is the PX domain. Residues 219–328 (PKGLEGMIMK…WGGAIEEFIR (110 aa)) enclose the PH domain. 2 S-palmitoyl cysteine lipidation sites follow: cysteine 240 and cysteine 241. Residues 459–486 (YLWAHHEKLVIIDQSVAFVGGIDLAYGR) form the PLD phosphodiesterase 1 domain. The tract at residues 463 to 928 (HHEKLVIIDQ…MLGKRDSEMA (466 aa)) is catalytic. 3 positions are modified to phosphoserine: serine 499, serine 561, and serine 629. The PLD phosphodiesterase 2 domain occupies 891–918 (ELIYVHSKLLIADDNTVIIGSANINDRS).

It belongs to the phospholipase D family. Interacts with PIP5K1B. As to expression, expressed in kidney, lung, and at a much lower levels, in brain, liver, heart, testis and spleen.

It localises to the cytoplasm. The protein resides in the perinuclear region. The protein localises to the endoplasmic reticulum membrane. Its subcellular location is the golgi apparatus membrane. It is found in the late endosome membrane. It catalyses the reaction a 1,2-diacyl-sn-glycero-3-phosphocholine + H2O = a 1,2-diacyl-sn-glycero-3-phosphate + choline + H(+). It carries out the reaction ethanol + a 1,2-diacyl-sn-glycero-3-phosphocholine = 1,2-diacyl-sn-glycero-3-phosphoethanol + choline. The enzyme catalyses 1,2-dihexadecanoyl-sn-glycero-3-phosphocholine + H2O = 1,2-dihexadecanoyl-sn-glycero-3-phosphate + choline + H(+). Its activity is regulated as follows. Stimulated by phosphatidylinositol 4,5-bisphosphate and phosphatidylinositol 3,4,5-trisphosphate, activated by the phosphokinase C-alpha, by the ADP-ribosylation factor-1 (ARF-1), and to a lesser extent by GTP-binding proteins: RHO A, RAC-1 and CDC42. Inhibited by oleate. Functionally, function as phospholipase selectivefor phosphatidylcholine. Implicated as a critical step in numerous cellular pathways, including signal transduction, membrane trafficking, and the regulation of mitosis. May be involved in the regulation of perinuclear intravesicular membrane traffic. The protein is Phospholipase D1 of Mus musculus (Mouse).